The chain runs to 314 residues: tRNA uridine(34) hydroxylase (314 aa).

The Rhodanese domain occupies 135 to 229; the sequence is SDPDTIVIDT…YLEEVPEEES (95 aa). Cys189 serves as the catalytic Cysteine persulfide intermediate.

This sequence belongs to the TrhO family.

The catalysed reaction is uridine(34) in tRNA + AH2 + O2 = 5-hydroxyuridine(34) in tRNA + A + H2O. In terms of biological role, catalyzes oxygen-dependent 5-hydroxyuridine (ho5U) modification at position 34 in tRNAs. This chain is tRNA uridine(34) hydroxylase, found in Agrobacterium fabrum (strain C58 / ATCC 33970) (Agrobacterium tumefaciens (strain C58)).